A 127-amino-acid chain; its full sequence is Small ribosomal subunit protein eS8 (127 aa).

The tract at residues 1 to 33 (MAIWQGKSMKKPSGGRAKMNRGKRKYELGREPA) is disordered.

This sequence belongs to the eukaryotic ribosomal protein eS8 family. As to quaternary structure, part of the 30S ribosomal subunit.

This Methanothermobacter thermautotrophicus (strain ATCC 29096 / DSM 1053 / JCM 10044 / NBRC 100330 / Delta H) (Methanobacterium thermoautotrophicum) protein is Small ribosomal subunit protein eS8 (rps8e).